We begin with the raw amino-acid sequence, 96 residues long: MNIRPLHDKVILKREDVETKSAGGIVLTGSAATKSTRAKVLAVGPGRLLENGSVHPMHVKVGDTVIFSDGYGVKTEKIDGEEVLIISESDILAIVE.

It belongs to the GroES chaperonin family. As to quaternary structure, heptamer of 7 subunits arranged in a ring. Interacts with the chaperonin GroEL.

The protein localises to the cytoplasm. Functionally, together with the chaperonin GroEL, plays an essential role in assisting protein folding. The GroEL-GroES system forms a nano-cage that allows encapsulation of the non-native substrate proteins and provides a physical environment optimized to promote and accelerate protein folding. GroES binds to the apical surface of the GroEL ring, thereby capping the opening of the GroEL channel. The protein is Co-chaperonin GroES of Aggregatibacter actinomycetemcomitans (Actinobacillus actinomycetemcomitans).